Here is a 361-residue protein sequence, read N- to C-terminus: Peptide chain release factor 1 (361 aa).

Position 235 is an N5-methylglutamine (glutamine 235).

This sequence belongs to the prokaryotic/mitochondrial release factor family. Post-translationally, methylated by PrmC. Methylation increases the termination efficiency of RF1.

The protein resides in the cytoplasm. In terms of biological role, peptide chain release factor 1 directs the termination of translation in response to the peptide chain termination codons UAG and UAA. This Buchnera aphidicola subsp. Schizaphis graminum (strain Sg) protein is Peptide chain release factor 1.